A 499-amino-acid polypeptide reads, in one-letter code: Lysine--tRNA ligase (499 aa).

Mg(2+) is bound by residues glutamate 408 and glutamate 415.

It belongs to the class-II aminoacyl-tRNA synthetase family. As to quaternary structure, homodimer. The cofactor is Mg(2+).

Its subcellular location is the cytoplasm. The enzyme catalyses tRNA(Lys) + L-lysine + ATP = L-lysyl-tRNA(Lys) + AMP + diphosphate. This chain is Lysine--tRNA ligase, found in Bacillus cytotoxicus (strain DSM 22905 / CIP 110041 / 391-98 / NVH 391-98).